Consider the following 313-residue polypeptide: MPTPKAFTLLGPTACGKTALALKIAETLPVEIISLDSALLYTGMDIGTAKPSASERAFVPHHLIDIITPVQTYSAARFVEDCTRLTGEITARGKCPLIVGGTMMYFRALTQGLNDLPEADACLRADLDEQKQMYGLDFLYRTLQKVDPETACRLKPNDSQRIGRALEVYYLTGRPMSAHLNGQPEHTLPFELYTAALIPENRARLHENIALRFHLMLEQGFIGEVENLRRRYPGLTADSPAIRCVGYRQAWEHLDGATDRQTFIEKGIAATRQLAKRQLTWLRKTPLDCVADPFSDGTSGTRLIEAAKRFFGE.

An ATP-binding site is contributed by 11–18 (GPTACGKT). 13 to 18 (TACGKT) lines the substrate pocket. 3 interaction with substrate tRNA regions span residues 36–39 (DSAL), 160–164 (QRIGR), and 243–248 (RCVGYR).

This sequence belongs to the IPP transferase family. In terms of assembly, monomer. Requires Mg(2+) as cofactor.

The enzyme catalyses adenosine(37) in tRNA + dimethylallyl diphosphate = N(6)-dimethylallyladenosine(37) in tRNA + diphosphate. Its function is as follows. Catalyzes the transfer of a dimethylallyl group onto the adenine at position 37 in tRNAs that read codons beginning with uridine, leading to the formation of N6-(dimethylallyl)adenosine (i(6)A). This Neisseria gonorrhoeae (strain NCCP11945) protein is tRNA dimethylallyltransferase.